We begin with the raw amino-acid sequence, 205 residues long: Recombination protein RecR (205 aa).

A C4-type zinc finger spans residues 59–74 (CAMCNTFCEGGLCDIC). The Toprim domain occupies 82 to 177 (RRLMVVHMPA…KVSRLSQGIP (96 aa)).

Belongs to the RecR family.

Its function is as follows. May play a role in DNA repair. It seems to be involved in an RecBC-independent recombinational process of DNA repair. It may act with RecF and RecO. This chain is Recombination protein RecR, found in Neisseria meningitidis serogroup C (strain 053442).